The chain runs to 209 residues: Small ribosomal subunit protein uS4 (209 aa).

The disordered stretch occupies residues Arg-22–Ser-45. The 62-residue stretch at Cys-93–Glu-154 folds into the S4 RNA-binding domain.

This sequence belongs to the universal ribosomal protein uS4 family. In terms of assembly, part of the 30S ribosomal subunit. Contacts protein S5. The interaction surface between S4 and S5 is involved in control of translational fidelity.

Functionally, one of the primary rRNA binding proteins, it binds directly to 16S rRNA where it nucleates assembly of the body of the 30S subunit. With S5 and S12 plays an important role in translational accuracy. This is Small ribosomal subunit protein uS4 from Chlamydia trachomatis serovar L2 (strain ATCC VR-902B / DSM 19102 / 434/Bu).